The chain runs to 453 residues: GTPase Der (453 aa).

2 EngA-type G domains span residues 3-178 (PKIA…PNNE) and 190-363 (LKLA…LECS). Residues 9 to 16 (GRPNVGKS), 57 to 61 (DTGGV), 130 to 133 (NKVD), 196 to 203 (GRPNAGKS), 243 to 247 (DTAGI), and 308 to 311 (NKTD) contribute to the GTP site. In terms of domain architecture, KH-like spans 364-448 (TRINTGVLNR…PIRIRLRSSH (85 aa)).

It belongs to the TRAFAC class TrmE-Era-EngA-EngB-Septin-like GTPase superfamily. EngA (Der) GTPase family. In terms of assembly, associates with the 50S ribosomal subunit.

In terms of biological role, GTPase that plays an essential role in the late steps of ribosome biogenesis. The protein is GTPase Der of Lawsonia intracellularis (strain PHE/MN1-00).